The following is a 504-amino-acid chain: ATP synthase subunit alpha (504 aa).

Residue glycine 169 to threonine 176 coordinates ATP.

This sequence belongs to the ATPase alpha/beta chains family. In terms of assembly, F-type ATPases have 2 components, CF(1) - the catalytic core - and CF(0) - the membrane proton channel. CF(1) has five subunits: alpha(3), beta(3), gamma(1), delta(1), epsilon(1). CF(0) has three main subunits: a(1), b(2) and c(9-12). The alpha and beta chains form an alternating ring which encloses part of the gamma chain. CF(1) is attached to CF(0) by a central stalk formed by the gamma and epsilon chains, while a peripheral stalk is formed by the delta and b chains.

It is found in the cell membrane. The enzyme catalyses ATP + H2O + 4 H(+)(in) = ADP + phosphate + 5 H(+)(out). Produces ATP from ADP in the presence of a proton gradient across the membrane. The alpha chain is a regulatory subunit. The polypeptide is ATP synthase subunit alpha (Syntrophomonas wolfei subsp. wolfei (strain DSM 2245B / Goettingen)).